Reading from the N-terminus, the 185-residue chain is Ribosome-recycling factor (185 aa).

This sequence belongs to the RRF family.

The protein resides in the cytoplasm. Its function is as follows. Responsible for the release of ribosomes from messenger RNA at the termination of protein biosynthesis. May increase the efficiency of translation by recycling ribosomes from one round of translation to another. This chain is Ribosome-recycling factor, found in Clostridium kluyveri (strain NBRC 12016).